A 137-amino-acid polypeptide reads, in one-letter code: Large ribosomal subunit protein uL16c (137 aa).

It belongs to the universal ribosomal protein uL16 family. Part of the 50S ribosomal subunit.

It localises to the plastid. The protein localises to the chloroplast. The chain is Large ribosomal subunit protein uL16c from Rhodomonas salina (Cryptomonas salina).